The chain runs to 218 residues: Cytochrome P450 3A19 (218 aa).

Heme is bound at residue Cys153.

It belongs to the cytochrome P450 family. Heme is required as a cofactor.

It is found in the endoplasmic reticulum membrane. The protein localises to the microsome membrane. The catalysed reaction is an organic molecule + reduced [NADPH--hemoprotein reductase] + O2 = an alcohol + oxidized [NADPH--hemoprotein reductase] + H2O + H(+). Its function is as follows. Cytochromes P450 are a group of heme-thiolate monooxygenases. In liver microsomes, this enzyme is involved in an NADPH-dependent electron transport pathway. It oxidizes a variety of structurally unrelated compounds, including steroids, fatty acids, and xenobiotics. This Capra hircus aegagrus (Wild goat) protein is Cytochrome P450 3A19 (CYP3A19).